An 844-amino-acid chain; its full sequence is MTEDVKADVPKKLSIQRRTKTTVSGTTTSGKSKAVQVEVRKKRTVKTDIAQQEEAKLKAQQEAEAKKIAEQKAAEEKARLEAEKAATKKEADEKSKAEKAKAETAKPAKSAVDSKAKFVDPEKEKRKAEEAELRRKAEEVARQKAEEQARRAAEEAKRYAEADDSDNESSSEDYSDYNLSSRYALEAEDEEDRRNENRGRGKNKVAKAKKGGRDDENSKNSKNERESNRKNQKDAKFGKGKNGKKGAALQQAFTKPAQVVKSDVVIGETITVAELANKMAVKATEIIKMMMKMGEMVTINQVIDQETAQLVAEELGHKVILRNENELEEAVLGDRDVNAEKVTRAPVVTIMGHVDHGKTSLLDYIRKAKVAAGEAGGITQHIGAYHVEMDDGKMITFLDTPGHAAFTSMRARGAKATDIVVLVVAADDGVMPQTIEAIQHAKAAGAPLVVAVNKIDKPEANPDRVEQELLQHDVISEKFGGDVQFVPVSAKKGTGVDDLLDAILLQSEVLELTAVKDGMASGVVIESYLDKGRGPVATILVQSGTLRKGDIVLCGFEYGRARAMRDENGKEVDEAGPSIPVELLGLSGVPAAGDEATVVRDEKKAREVALYRQGKFREVKLARQQKAKLENMFSNMSEGDVAELNVIVKADVQGSVEAIVQALNELSTNEVKVKVVGSGVGGITETDATLATASNAIIVGFNVRADATARRVIEAENIDLRYYSIIYELLNEIKAAMSGMLEPEFKQEIIGLAEVRDVFRHPKFGAIAGCMVTEGVVKRNNPIRVLRDNVVIFEGELESLRRFKDDVSEVRNGMECGIGVKNYNDVKVGDQIEVFEVVEVKRSI.

Over residues 1-11 (MTEDVKADVPK) the composition is skewed to basic and acidic residues. Disordered regions lie at residues 1–35 (MTEDVKADVPKKLSIQRRTKTTVSGTTTSGKSKAV) and 79–248 (RLEA…KGAA). Low complexity predominate over residues 21-33 (TTVSGTTTSGKSK). Over residues 79–161 (RLEAEKAATK…AAEEAKRYAE (83 aa)) the composition is skewed to basic and acidic residues. A compositionally biased stretch (acidic residues) spans 162 to 175 (ADDSDNESSSEDYS). A compositionally biased stretch (basic residues) spans 200–210 (RGKNKVAKAKK). Over residues 211–237 (GGRDDENSKNSKNERESNRKNQKDAKF) the composition is skewed to basic and acidic residues. The tr-type G domain maps to 343–513 (TRAPVVTIMG…LLQSEVLELT (171 aa)). Residues 352-359 (GHVDHGKT) are G1. Position 352 to 359 (352 to 359 (GHVDHGKT)) interacts with GTP. The interval 377-381 (GITQH) is G2. Positions 399–402 (DTPG) are G3. GTP is bound by residues 399–403 (DTPGH) and 453–456 (NKID). Residues 453–456 (NKID) form a G4 region. Positions 489 to 491 (SAK) are G5.

The protein belongs to the TRAFAC class translation factor GTPase superfamily. Classic translation factor GTPase family. IF-2 subfamily.

It is found in the cytoplasm. In terms of biological role, one of the essential components for the initiation of protein synthesis. Protects formylmethionyl-tRNA from spontaneous hydrolysis and promotes its binding to the 30S ribosomal subunits. Also involved in the hydrolysis of GTP during the formation of the 70S ribosomal complex. This is Translation initiation factor IF-2 from Haemophilus influenzae (strain PittGG).